The following is a 583-amino-acid chain: Chloroplast sensor kinase, chloroplastic (583 aa).

Residues 1–50 (MSSIYLHGLSRRRRIGSVIVAIYMLDSCGAFLSASGSGRYPGFSYRGLSV) constitute a chloroplast transit peptide. A GAF region spans residues 97–277 (LFQELALSQL…SMDTERAALQ (181 aa)). Residue C115 participates in [3Fe-4S] cluster binding. A Phosphohistidine; by autocatalysis modification is found at H292. The interval 412-442 (AASGSNGPSNSTTSFSGNGSDVSTYTEDDGA) is disordered. Residues 414–431 (SGSNGPSNSTTSFSGNGS) show a composition bias toward low complexity. The Histidine kinase domain occupies 447 to 583 (SSLFSEMDLE…ALDWTLRKHW (137 aa)).

This sequence belongs to the chloroplast sensor kinase protein family. In terms of assembly, oligomerizes. The cofactor is [3Fe-4S] cluster. In terms of processing, autophosphorylates, possibly on His-292.

It is found in the plastid. The protein resides in the chloroplast stroma. It catalyses the reaction ATP + protein L-histidine = ADP + protein N-phospho-L-histidine.. In terms of biological role, sensor kinase that senses the plastoquinone (PQ) redox state involved in stoichiometry adjustment of both photosystems (e.g. long-term adaptation via transcriptional regulation of reaction center genes of photosystems I and II) and state transitions (e.g. short-term adaptation involving reversible post-translational phosphorylation of light-harvesting complex II, LHC II), thus linking photosynthesis with gene expression in chloroplasts. Reduced PQ suppresses its autophosphorylation activity. This is Chloroplast sensor kinase, chloroplastic from Phaeodactylum tricornutum (strain CCAP 1055/1).